The chain runs to 888 residues: Isoleucine--tRNA ligase (888 aa).

The 'HIGH' region motif lies at 61–71 (PYANGSIHIGH). Residue Glu551 coordinates L-isoleucyl-5'-AMP. Residues 592–596 (KMSKQ) carry the 'KMSKS' region motif. ATP is bound at residue Lys595. Zn(2+)-binding residues include Cys862, Cys865, Cys879, and Cys882.

The protein belongs to the class-I aminoacyl-tRNA synthetase family. IleS type 1 subfamily. As to quaternary structure, monomer. Zn(2+) is required as a cofactor.

It localises to the cytoplasm. It carries out the reaction tRNA(Ile) + L-isoleucine + ATP = L-isoleucyl-tRNA(Ile) + AMP + diphosphate. Functionally, catalyzes the attachment of isoleucine to tRNA(Ile). As IleRS can inadvertently accommodate and process structurally similar amino acids such as valine, to avoid such errors it has two additional distinct tRNA(Ile)-dependent editing activities. One activity is designated as 'pretransfer' editing and involves the hydrolysis of activated Val-AMP. The other activity is designated 'posttransfer' editing and involves deacylation of mischarged Val-tRNA(Ile). The sequence is that of Isoleucine--tRNA ligase from Mycoplasmopsis pulmonis (strain UAB CTIP) (Mycoplasma pulmonis).